The chain runs to 33 residues: Photosystem II reaction center protein Psb30 (33 aa).

The chain crosses the membrane as a helical span at residues 5–25 (VIAQLTVLALIVASGPLVIAL).

This sequence belongs to the Psb30/Ycf12 family. As to quaternary structure, PSII is composed of 1 copy each of membrane proteins PsbA, PsbB, PsbC, PsbD, PsbE, PsbF, PsbH, PsbI, PsbJ, PsbK, PsbL, PsbM, PsbT, PsbX, PsbY, PsbZ, Psb30/Ycf12, peripheral proteins of the oxygen-evolving complex and a large number of cofactors. It forms dimeric complexes.

The protein localises to the plastid. It localises to the chloroplast thylakoid membrane. In terms of biological role, a core subunit of photosystem II (PSII), probably helps stabilize the reaction center. This Marchantia polymorpha (Common liverwort) protein is Photosystem II reaction center protein Psb30.